The primary structure comprises 141 residues: Hemoglobin subunit alpha (141 aa).

Residues Val-1–Arg-141 form the Globin domain. The residue at position 3 (Ser-3) is a Phosphoserine. An N6-succinyllysine mark is found at Lys-7 and Lys-11. An N6-acetyllysine; alternate modification is found at Lys-16. An N6-succinyllysine; alternate modification is found at Lys-16. Tyr-24 carries the post-translational modification Phosphotyrosine. An N6-succinyllysine modification is found at Lys-40. His-58 is an O2 binding site. Residue His-87 coordinates heme b. Phosphoserine is present on Ser-102. The residue at position 108 (Thr-108) is a Phosphothreonine. Ser-124 bears the Phosphoserine mark. A phosphothreonine mark is found at Thr-134 and Thr-137. Position 138 is a phosphoserine (Ser-138).

Belongs to the globin family. Heterotetramer of two alpha chains and two beta chains. In terms of tissue distribution, red blood cells.

Functionally, involved in oxygen transport from the lung to the various peripheral tissues. Hemopressin acts as an antagonist peptide of the cannabinoid receptor CNR1. Hemopressin-binding efficiently blocks cannabinoid receptor CNR1 and subsequent signaling. This Erinaceus europaeus (Western European hedgehog) protein is Hemoglobin subunit alpha (HBA).